A 717-amino-acid polypeptide reads, in one-letter code: Choline transporter-like protein 5 (717 aa).

Residues 1 to 24 (MNDTEKPADTASEEEDFGDPRTYD) are disordered. Over 1–38 (MNDTEKPADTASEEEDFGDPRTYDPDFKGPVSNRSCTD) the chain is Cytoplasmic. Residues 39–59 (VLCCMIFLLCIVGYIVLGLVA) form a helical membrane-spanning segment. The Extracellular segment spans residues 60 to 242 (WVHGDPRRAA…KVFEDYATTW (183 aa)). N-linked (GlcNAc...) asparagine glycosylation is found at N88 and N190. Residues 243 to 263 (YWILIGLMIAMVLSWIFLILL) form a helical membrane-spanning segment. Over 264 to 265 (RF) the chain is Cytoplasmic. Residues 266-286 (IAGCLFWVFMIGVIGIIGYGI) form a helical membrane-spanning segment. The Extracellular segment spans residues 287–325 (WHCYQQYTNLQEHPRSVLTVYDIGIQTNISMYFELQQTW). N314 carries N-linked (GlcNAc...) asparagine glycosylation. A helical transmembrane segment spans residues 326–346 (FTLMIILCIIEVIVILMLIFL). Topologically, residues 347–351 (RNRIR) are cytoplasmic. The chain crosses the membrane as a helical span at residues 352–372 (VAIILLKEGSKAIGYVPSTLV). Over 373–374 (YP) the chain is Extracellular. The chain crosses the membrane as a helical span at residues 375–395 (ALTFILLSICICYWVVTAVFL). Over 396–460 (ATSGVPVYKV…QYIPTFHVYN (65 aa)) the chain is Cytoplasmic. Residues 461-481 (LFVFLWLINFVIALGQCALAG) form a helical membrane-spanning segment. Residues 482–515 (AFATYYWAMKKPDDIPRYPLFTAFGRAIRYHTGS) are Extracellular-facing. Residues 516–536 (LAFGSLIIALIQMFKIVLEYL) traverse the membrane as a helical segment. Residues 537–610 (NHRLKRTENT…KVAVTDEVTY (74 aa)) are Cytoplasmic-facing. A helical transmembrane segment spans residues 611 to 631 (FVLFLGKILVAGSIGVLAFLF). Topologically, residues 632 to 649 (FTQRLPVIAQGPASLNYY) are extracellular. The helical transmembrane segment at 650-670 (WVPLLTVILGSYLIAHGFFSV) threads the bilayer. Over 671–717 (YAMCVETIFICFLEDLERNDGSTARPYYVSQPLLKIFQEENLQTKQQ) the chain is Cytoplasmic.

This sequence belongs to the CTL (choline transporter-like) family.

It is found in the cell membrane. It carries out the reaction choline(out) + n H(+)(in) = choline(in) + n H(+)(out). Its function is as follows. Choline/H+ antiporter. This Macaca fascicularis (Crab-eating macaque) protein is Choline transporter-like protein 5 (SLC44A5).